The primary structure comprises 683 residues: Long-chain fatty acid transport protein 3 (683 aa).

A helical membrane pass occupies residues 3 to 23; that stretch reads ALLLLPLLLLLPLLLLKLHLW. Positions 119–128 are enriched in gly residues; it reads GGDSGEGSAG. The tract at residues 119-145 is disordered; it reads GGDSGEGSAGEGERAAPGAGDAAAGSG. Low complexity predominate over residues 133–145; that stretch reads AAPGAGDAAAGSG. ATP is bound by residues 288 to 292, His-331, Thr-428, Asp-528, Arg-543, and Lys-635; that span reads TSGTT.

This sequence belongs to the ATP-dependent AMP-binding enzyme family. Expressed in bronchial and bronchiolar epithelial cells (at protein level).

The protein localises to the mitochondrion membrane. The catalysed reaction is a fatty acid(in) = a fatty acid(out). It catalyses the reaction a long-chain fatty acid + ATP + CoA = a long-chain fatty acyl-CoA + AMP + diphosphate. The enzyme catalyses hexadecanoate + ATP + CoA = hexadecanoyl-CoA + AMP + diphosphate. It carries out the reaction (9Z)-octadecenoate + ATP + CoA = (9Z)-octadecenoyl-CoA + AMP + diphosphate. The catalysed reaction is (9Z,12Z)-octadecadienoate + ATP + CoA = (9Z,12Z)-octadecadienoyl-CoA + AMP + diphosphate. It catalyses the reaction (5Z,8Z,11Z,14Z)-eicosatetraenoate + ATP + CoA = (5Z,8Z,11Z,14Z)-eicosatetraenoyl-CoA + AMP + diphosphate. The enzyme catalyses a very long-chain fatty acid + ATP + CoA = a very long-chain fatty acyl-CoA + AMP + diphosphate. It carries out the reaction tetracosanoate + ATP + CoA = tetracosanoyl-CoA + AMP + diphosphate. In terms of biological role, mainly functions as an acyl-CoA ligase catalyzing the ATP-dependent formation of fatty acyl-CoA using LCFA and very-long-chain fatty acids (VLCFA) as substrates. Can mediate the levels of long-chain fatty acids (LCFA) in the cell by facilitating their transport across membranes. In Homo sapiens (Human), this protein is Long-chain fatty acid transport protein 3.